A 20-amino-acid chain; its full sequence is 21 kDa cold shock-induced protein (20 aa).

The span at 1-12 shows a compositional bias: basic and acidic residues; the sequence is TDSIKETIKETV. The interval 1–20 is disordered; it reads TDSIKETIKETVNHQAEWPY.

The protein is 21 kDa cold shock-induced protein of Streptococcus thermophilus.